The primary structure comprises 976 residues: Ubiquitin ligase-binding protein BUL1 (976 aa).

The interval 1 to 65 is disordered; that stretch reads MAKDLNDSGF…SPSLHSPKSW (65 aa). Residues 23–39 show a composition bias toward polar residues; the sequence is SDFTANSSTTMNVNANT. Positions 53–64 are enriched in low complexity; sequence SSRSPSLHSPKS. 2 positions are modified to phosphoserine: serine 58 and serine 70. Disordered regions lie at residues 82 to 124, 145 to 196, and 857 to 878; these read LAHS…DGDI, PQGN…SSST, and SEDS…ASLT. The short motif at 156–160 is the PY-motif element; that stretch reads FPPSY. The span at 163 to 176 shows a compositional bias: low complexity; that stretch reads ANNSTATGAAGSSA. Over residues 177–196 the composition is skewed to polar residues; the sequence is DLSHQSLSTDALGATRSSST. A compositionally biased stretch (low complexity) spans 862–878; the sequence is SHTGNGSSSSPSSASLT.

The protein belongs to the BUL1 family. As to quaternary structure, component of the RSP5-BUL1/2 ubiquitin ligase complex composed of at least RSP5 and BUL1 or BUL2.

It localises to the cytoplasm. Its pathway is protein modification; protein ubiquitination. Its function is as follows. Component of a RSP5 ubiquitin ligase complex which specifies polyubiquitination and intracellular trafficking of the general amino acid permease GAP1 as well as other permeases such as PMA1. The RSP5-BUL1/2 complex is also necessary for the heat-shock element (HSE)-mediated gene expression, nitrogen starvation GLN3-dependent transcription and pressure-induced differential regulation of the 2 tryptophan permeases TAT1 and TAT2. The protein is Ubiquitin ligase-binding protein BUL1 (BUL1) of Saccharomyces cerevisiae (strain ATCC 204508 / S288c) (Baker's yeast).